The sequence spans 443 residues: Probable serine transporter (443 aa).

The Cytoplasmic portion of the chain corresponds to 1 to 48 (MEIASNKGVIADASTPAGRAGMSESEWREAIKFDSTDTGWVIMSIGMA). The chain crosses the membrane as a helical span at residues 49–69 (IGAGIVFLPVQVGLMGLWVFL). At 70 to 110 (LSSVIGYPAMYLFQRLFINTLAESPECKDYPSVISGYLGKN) the chain is on the periplasmic side. A helical membrane pass occupies residues 111–131 (WGILLGALYFVMLVIWMFVYS). The Cytoplasmic portion of the chain corresponds to 132-149 (TAITNDSASYLHTFGVTE). The helical transmembrane segment at 150–170 (GLLSDSPFYGLVLICILVAIS) threads the bilayer. Topologically, residues 171–182 (SRGEKLLFKIST) are periplasmic. The chain crosses the membrane as a helical span at residues 183–203 (GMVLTKLLVVAALGVSMVGMW). The Cytoplasmic portion of the chain corresponds to 204–214 (HLYNVGSLPPL). Residues 215–235 (GLLVKNAIITLPFTLTSILFI) form a helical membrane-spanning segment. Topologically, residues 236 to 264 (QTLSPMVISYRSREKSIEVARHKALRAMN) are periplasmic. A helical transmembrane segment spans residues 265-285 (IAFGILFVTVFFYAVSFTLAM). At 286-297 (GHDEAVKAYEQN) the chain is on the cytoplasmic side. The next 2 helical transmembrane spans lie at 298 to 318 (ISAL…WVKV) and 319 to 339 (VSVI…YLGF). Over 340 to 367 (REATQGIVMNILRRKMPAEKINENLVQR) the chain is Cytoplasmic. Residues 368-388 (GIMIFAILLAWSAIVLNAPVL) traverse the membrane as a helical segment. A topological domain (periplasmic) is located at residue Ser-389. Residues 390-410 (FTSICSPIFGMVGCLIPAWLV) traverse the membrane as a helical segment. The Cytoplasmic portion of the chain corresponds to 411 to 421 (YKVPALHKYKG). Residues 422-442 (MSLYLIIVTGLLLCVSPFLAF) form a helical membrane-spanning segment. Ser-443 is a topological domain (periplasmic).

Belongs to the amino acid/polyamine transporter 2 family. SdaC/TdcC subfamily.

It localises to the cell inner membrane. Plays a role in L-cysteine detoxification. May transport both D- and L-serine. The sequence is that of Probable serine transporter (dlsT) from Escherichia coli (strain K12).